A 908-amino-acid polypeptide reads, in one-letter code: DNA (cytosine-5)-methyltransferase 3A (908 aa).

The span at 1–13 (MPSSGPGDTSSSS) shows a compositional bias: low complexity. Disordered stretches follow at residues 1–183 (MPSS…PMPR) and 226–281 (NQAS…PEYE). Residues 14-37 (LEREDDRKEGEEQEENRGKEERQE) are compositionally biased toward basic and acidic residues. Residues 44-54 (KVGRPGRKRKH) are compositionally biased toward basic residues. Residues 69 to 80 (TTKSQPMAQDSG) show a composition bias toward polar residues. Ser102 carries the phosphoserine modification. Residues 110-124 (GAPAEGEGTETPPEA) show a composition bias toward low complexity. The residue at position 120 (Thr120) is a Phosphothreonine. Lys158 participates in a covalent cross-link: Glycyl lysine isopeptide (Lys-Gly) (interchain with G-Cter in SUMO2). Arg167 carries the post-translational modification Omega-N-methylarginine. Residues 195–399 (SKRKRDEWLA…DSGKAVEVQN (205 aa)) form an interaction with DNMT1 and DNMT3B region. Residues Ser239 and Ser251 each carry the phosphoserine modification. Over residues 242–256 (AVQQPTDPASPTVAT) the composition is skewed to polar residues. Residue Thr257 is modified to Phosphothreonine. Residues 265–275 (AGDKNATKAAD) show a composition bias toward basic and acidic residues. The 59-residue stretch at 288–346 (IGELVWGKLRGFSWWPGRIVSWWMTGRSRAAEGTRWVMWFGDGKFSVVCVEKLMPLSSF) folds into the PWWP domain. 2 positions are modified to phosphoserine: Ser386 and Ser389. Residues 443-462 (AYAPPPPAKKPRKSTTEKPK) form a disordered region. In terms of domain architecture, ADD spans 478–610 (EVRQKCRNIE…LQMFFANNHD (133 aa)). A GATA-type; atypical zinc finger spans residues 489–519 (ICISCGSLNVTLEHPLFIGGMCQNCKNCFLE). The tract at residues 490–582 (CISCGSLNVT…KEDPWNCYMC (93 aa)) is interaction with the PRC2/EED-EZH2 complex. The segment at 530–586 (QSYCTICCGGREVLMCGNNNCCRCFCVECVDLLVGPGAAQAAIKEDPWNCYMCGHKG) adopts a PHD-type; atypical zinc-finger fold. The SAM-dependent MTase C5-type domain occupies 630 to 908 (IRVLSLFDGI…APLKEYFACV (279 aa)). S-adenosyl-L-methionine contacts are provided by residues 637–641 (DGIAT), Glu660, and 682–684 (DVR). Residue Cys706 is part of the active site. The residue at position 706 (Cys706) is an S-methylcysteine; by autocatalysis. 887–889 (RSW) lines the S-adenosyl-L-methionine pocket.

It belongs to the class I-like SAM-binding methyltransferase superfamily. C5-methyltransferase family. In terms of assembly, heterotetramer composed of 1 DNMT3A homodimer and 2 DNMT3L subunits (DNMT3L-DNMT3A-DNMT3A-DNMT3L). Interacts with DNMT1 and DNMT3B. Interacts with MPHOSPH8. Interacts with histone H3 that is not methylated at 'Lys-4' (H3K4). Binds the ZBTB18 transcriptional repressor. Interacts with SETDB1. Associates with HDAC1 through its ADD domain. Interacts with UHRF1. Interacts with the PRC2/EED-EZH2 complex. Interacts with UBC9, PIAS1 and PIAS2. Interacts with SPOCD1. Interacts with ZNF263; recruited to the SIX3 promoter along with other proteins involved in chromatin modification and transcriptional corepression where it contributes to transcriptional repression. Post-translationally, auto-methylated at Cys-706: auto-methylation takes place in absence of DNA substrate and inactivates the DNA methyltransferase activity. Inactivation by auto-methylation may be used to inactivate unused DNA methyltransferases in the cell. Sumoylated; sumoylation disrupts the ability to interact with histone deacetylases (HDAC1 and HDAC2) and repress transcription. As to expression, isoform 1 is expressed ubiquitously at low levels. Expression of isoform 2 is restricted to tissues containing cells which are undergoing active de novo methylation, including spleen, testis and thymus.

It localises to the nucleus. The protein localises to the chromosome. The protein resides in the cytoplasm. It carries out the reaction a 2'-deoxycytidine in DNA + S-adenosyl-L-methionine = a 5-methyl-2'-deoxycytidine in DNA + S-adenosyl-L-homocysteine + H(+). It catalyses the reaction L-cysteinyl-[protein] + S-adenosyl-L-methionine = S-methyl-L-cysteinyl-[protein] + S-adenosyl-L-homocysteine + H(+). Activated by binding to the regulatory factor DNMT3L. Auto-methylation at Cys-706 in absence of DNA inactivates the DNA methyltransferase activity. In terms of biological role, required for genome-wide de novo methylation and is essential for the establishment of DNA methylation patterns during development. DNA methylation is coordinated with methylation of histones. It modifies DNA in a non-processive manner and also methylates non-CpG sites. May preferentially methylate DNA linker between 2 nucleosomal cores and is inhibited by histone H1. Plays a role in paternal and maternal imprinting. Required for methylation of most imprinted loci in germ cells. Acts as a transcriptional corepressor for ZBTB18. Recruited to trimethylated 'Lys-36' of histone H3 (H3K36me3) sites. Can actively repress transcription through the recruitment of HDAC activity. Also has weak auto-methylation activity on Cys-706 in absence of DNA. This is DNA (cytosine-5)-methyltransferase 3A from Mus musculus (Mouse).